Here is a 92-residue protein sequence, read N- to C-terminus: FMRFamide-like neuropeptides 5 (92 aa).

A propeptide spanning residues 1–41 (MSSRSTTIAFLFIATLLVFQCVSAQSSAEDADYLEKYQRIA) is cleaved from the precursor. Phenylalanine amide occurs at positions 51 and 61. The propeptide occupies 64 to 82 (SRNTWEDGYASPSVNELYV). Phenylalanine 91 carries the post-translational modification Phenylalanine amide.

This sequence belongs to the FARP (FMRFamide related peptide) family. In terms of tissue distribution, each flp gene is expressed in a distinct set of neurons. Flp-5 is expressed in the ASE sensory neurons, the 14 and M4 cholinergic pharyngeal motoneurons, and the PVT and RMG neurons. It is weakly expressed in the PB and 12 neurons. Also expressed in pharyngeal muscle.

The protein localises to the secreted. In terms of biological role, FMRFamides and FMRFamide-like peptides are neuropeptides. GAKFIRF-amide has an excitatory effect on dissected pharyngeal myogenic muscle system. The protein is FMRFamide-like neuropeptides 5 of Caenorhabditis elegans.